A 406-amino-acid polypeptide reads, in one-letter code: Protease ElaD (406 aa).

Residue His234 is part of the active site. The Nucleophile role is filled by Cys316.

Belongs to the peptidase C79 family.

Protease that can act as an efficient and specific deubiquitinating enzyme in vitro. Does not possess desumoylating and deneddylating activities. The physiological substrate is unknown. This chain is Protease ElaD (elaD), found in Escherichia coli O139:H28 (strain E24377A / ETEC).